A 419-amino-acid chain; its full sequence is E3 ubiquitin-protein ligase RNFT1 (419 aa).

The tract at residues 1–120 (MKLRAQFDRG…SGESDLESGE (120 aa)) is disordered. Composition is skewed to polar residues over residues 31 to 44 (EPSS…SLTL) and 72 to 82 (GSSSGSTNGRG). Residues 84 to 102 (TSRRMRTASHSHSHTHGHG) show a composition bias toward basic residues. 6 helical membrane passes run 141 to 161 (FIVI…AVAV), 187 to 207 (LHCA…FYTF), 217 to 237 (FFAN…SVGV), 240 to 260 (FILK…PCPL), 270 to 290 (YMLI…PLWF), and 303 to 323 (VGLT…LLAL). Residues 352–403 (IREAGDICPICQADFKQPRVLVCQHIFCEECIAQWLNQERTCPLCRTVITDK) form a required for ubiquitin ligase activity and for protection against ER stress-induced cell death region. The RING-type zinc finger occupies 359 to 397 (CPICQADFKQPRVLVCQHIFCEECIAQWLNQERTCPLCR).

It localises to the endoplasmic reticulum membrane. The enzyme catalyses S-ubiquitinyl-[E2 ubiquitin-conjugating enzyme]-L-cysteine + [acceptor protein]-L-lysine = [E2 ubiquitin-conjugating enzyme]-L-cysteine + N(6)-ubiquitinyl-[acceptor protein]-L-lysine.. It functions in the pathway protein modification; protein ubiquitination. E3 ubiquitin-protein ligase that acts in the endoplasmic reticulum (ER)-associated degradation (ERAD) pathway, which targets misfolded proteins that accumulate in the endoplasmic reticulum (ER) for ubiquitination and subsequent proteasome-mediated degradation. Protects cells from ER stress-induced apoptosis. This chain is E3 ubiquitin-protein ligase RNFT1 (rnft1), found in Danio rerio (Zebrafish).